The primary structure comprises 337 residues: Monoacylglycerol lipase ABHD6 (337 aa).

Residues 1-19 (MDLDVVNMFVIAGGTLALP) lie on the Extracellular side of the membrane. A helical; Signal-anchor for type II membrane protein membrane pass occupies residues 20–42 (ILAFVASFLLWPSALIRIYYWYW). At 43–337 (RRTLGMQVRY…HSTDNSKKLD (295 aa)) the chain is on the cytoplasmic side. The AB hydrolase-1 domain maps to 72 to 313 (PSILMLHGFS…CGHSVVMERP (242 aa)). Serine 148 functions as the Nucleophile in the catalytic mechanism. Active-site charge relay system residues include aspartate 278 and histidine 306.

Belongs to the AB hydrolase superfamily.

The protein localises to the late endosome membrane. It localises to the lysosome membrane. Its subcellular location is the mitochondrion membrane. The enzyme catalyses Hydrolyzes glycerol monoesters of long-chain fatty acids.. It catalyses the reaction 1-octanoylglycerol + H2O = octanoate + glycerol + H(+). It carries out the reaction 1-decanoylglycerol + H2O = decanoate + glycerol + H(+). The catalysed reaction is 1-dodecanoylglycerol + H2O = dodecanoate + glycerol + H(+). The enzyme catalyses 1-tetradecanoylglycerol + H2O = tetradecanoate + glycerol + H(+). It catalyses the reaction 2-hexadecanoylglycerol + H2O = glycerol + hexadecanoate + H(+). It carries out the reaction 2-(9Z-octadecenoyl)-glycerol + H2O = glycerol + (9Z)-octadecenoate + H(+). The catalysed reaction is 1-(9Z-octadecenoyl)-glycerol + H2O = glycerol + (9Z)-octadecenoate + H(+). The enzyme catalyses 2-(9Z,12Z-octadecadienoyl)-glycerol + H2O = (9Z,12Z)-octadecadienoate + glycerol + H(+). It catalyses the reaction 2-(5Z,8Z,11Z,14Z-eicosatetraenoyl)-glycerol + H2O = glycerol + (5Z,8Z,11Z,14Z)-eicosatetraenoate + H(+). It carries out the reaction 1-(5Z,8Z,11Z,14Z-eicosatetraenoyl)-glycerol + H2O = glycerol + (5Z,8Z,11Z,14Z)-eicosatetraenoate + H(+). The catalysed reaction is 1-(9Z,12Z-octadecadienoyl)-glycerol + H2O = (9Z,12Z)-octadecadienoate + glycerol + H(+). The enzyme catalyses 3-(9Z-octadecenoyl)-sn-glycero-1-phospho-(3'-(9Z-octadecenoyl)-1'-sn-glycerol) + H2O = 3-(9Z-octadecenoyl)-sn-glycero-1-phospho-(1'-sn-glycerol) + (9Z)-octadecenoate + H(+). It catalyses the reaction (S,S)-2-(9Z-octadecenoyl)-sn-glycero-1-phospho-(2'-(9Z-octadecenoyl)-1'-sn-glycerol) + H2O = (S,S)-2-(9Z-octadecenoyl)-sn-glycero-1-phospho-(1'-sn-glycerol) + (9Z)-octadecenoate + H(+). It carries out the reaction (R,R)-2-(9Z-octadecenoyl)-sn-glycero-3-phospho-(2'-(9Z-octadecenoyl)-3'-sn-glycerol) + H2O = (R,R)-2-(9Z-octadecenoyl)-sn-glycero-3-phospho-(3'-sn-glycerol) + (9Z)-octadecenoate + H(+). In terms of biological role, lipase that preferentially hydrolysis medium-chain saturated monoacylglycerols including 2-arachidonoylglycerol. Through 2-arachidonoylglycerol degradation may regulate endocannabinoid signaling pathways. Also has a lysophosphatidyl lipase activity with a preference for lysophosphatidylglycerol among other lysophospholipids. Also able to degrade bis(monoacylglycero)phosphate (BMP) and constitutes the major enzyme for BMP catabolism. BMP, also known as lysobisphosphatidic acid, is enriched in late endosomes and lysosomes and plays a key role in the formation of intraluminal vesicles and in lipid sorting. This Bos taurus (Bovine) protein is Monoacylglycerol lipase ABHD6.